Here is a 962-residue protein sequence, read N- to C-terminus: Synphilin-1 (962 aa).

3 disordered regions span residues 80–99 (SPLK…DQKN), 104–137 (YQKG…EPSQ), and 222–249 (TALR…PAYE). 4 ANK repeats span residues 348-379 (NGNN…CLNE), 383-412 (EQLT…AIAE), 418-447 (DFPS…EQGI), and 455-484 (EGNS…NVTM). Positions 522-548 (VKLTKQLKEQTVERVTLQSQLQQLLEA) form a coiled coil. A disordered region spans residues 548–590 (AQKSEGKSLPSSPSSPSSPASTKSQWKALDTDEESTGKSKVGA). Over residues 554-571 (KSLPSSPSSPSSPASTKS) the composition is skewed to low complexity. The stretch at 602 to 631 (VSSRARTKGKDEDSDKILRQLLGKEISENV) is one ANK 5 repeat. Positions 667–684 (RQLMQRSLSESDTDSNNS) are enriched in low complexity. The tract at residues 667-852 (RQLMQRSLSE…QRTSESGEQM (186 aa)) is disordered. Over residues 685–699 (EDPKNTPVKRADRPR) the composition is skewed to basic and acidic residues. Residues 698–728 (PRPQPIVESVENVDSAESLHLMIKKHSLASG) form an ANK 6 repeat. The segment covering 772 to 790 (PSTEATQSSPDSTAAQKVA) has biased composition (polar residues). Basic and acidic residues predominate over residues 831–840 (NGEKDKDKGR).

As to quaternary structure, associates with SNCA, RNF19A and PRKN. Post-translationally, ubiquitinated; mediated by SIAH1 or RNF19A and leading to its subsequent proteasomal degradation.

The chain is Synphilin-1 (Sncaip) from Mus musculus (Mouse).